The following is a 115-amino-acid chain: MRPFILLALLVSVTVAFNIFRDEVVPEEQLLAVRRTTRDASDSSSDSDEKDDAKTTVTDGSGSGESPAEEQLRRVVRDVDEEASGEGSGAAEVTSVPVRFVRSVDAEGSGSGSDE.

The first 16 residues, Met1 to Ala16, serve as a signal peptide directing secretion. The tract at residues Val33 to Val96 is disordered. O-linked (Xyl...) (chondroitin sulfate) serine glycosylation is found at Ser61, Ser63, Ser84, Ser88, and Ser109.

In Caenorhabditis elegans, this protein is Chondroitin proteoglycan 8.